The primary structure comprises 398 residues: Acetate kinase 1 (398 aa).

Mg(2+) is bound at residue N9. Residue K16 coordinates ATP. A substrate-binding site is contributed by R89. The active-site Proton donor/acceptor is D146. ATP-binding positions include 206–210 (HLGNG), 281–283 (DCR), and 329–333 (GIGEN). Residue E384 coordinates Mg(2+).

This sequence belongs to the acetokinase family. In terms of assembly, homodimer. Requires Mg(2+) as cofactor. Mn(2+) is required as a cofactor.

It is found in the cytoplasm. It catalyses the reaction acetate + ATP = acetyl phosphate + ADP. It functions in the pathway metabolic intermediate biosynthesis; acetyl-CoA biosynthesis; acetyl-CoA from acetate: step 1/2. Functionally, catalyzes the formation of acetyl phosphate from acetate and ATP. Can also catalyze the reverse reaction. The sequence is that of Acetate kinase 1 from Photobacterium profundum (strain SS9).